We begin with the raw amino-acid sequence, 354 residues long: Protein-arginine kinase (354 aa).

Positions isoleucine 24–alanine 254 constitute a Phosphagen kinase C-terminal domain. ATP is bound by residues serine 27–arginine 31, histidine 92, arginine 125, arginine 176–methionine 180, and arginine 207–glutamate 212. Positions arginine 337–alanine 342 match the RDXXRA motif of the pArg binding pocket involved in allosteric regulation motif.

This sequence belongs to the ATP:guanido phosphotransferase family.

It carries out the reaction L-arginyl-[protein] + ATP = N(omega)-phospho-L-arginyl-[protein] + ADP + H(+). Its activity is regulated as follows. Appears to be allosterically activated by the binding of pArg-containing polypeptides to the pArg-binding pocket localized in the C-terminal domain of McsB. Functionally, catalyzes the specific phosphorylation of arginine residues in a large number of proteins. Is part of the bacterial stress response system. Protein arginine phosphorylation has a physiologically important role and is involved in the regulation of many critical cellular processes, such as protein homeostasis, motility, competence, and stringent and stress responses, by regulating gene expression and protein activity. This is Protein-arginine kinase from Bacillus cereus (strain AH187).